A 113-amino-acid polypeptide reads, in one-letter code: RING-box protein 2 (113 aa).

A disordered region spans residues 1-26 (MADVEDGEETCALASHSGSSGSKSGG). Ala-2 bears the N-acetylalanine mark. Phosphothreonine; by CK2 is present on Thr-10. Zn(2+) contacts are provided by Cys-50, Cys-53, Cys-61, Cys-64, Cys-73, Cys-80, His-82, His-85, Cys-87, Cys-88, Cys-99, and Cys-102. An RING-type zinc finger spans residues 61 to 103 (CLRCQAENKQEDCVVVWGECNHSFHNCCMSLWVKQNNRCPLCQ).

This sequence belongs to the RING-box family. As to quaternary structure, catalytic component of multiple cullin-5-RING E3 ubiquitin-protein ligase complexes (ECS complexes, also named CRL5 complexes) composed of CUL5, Elongin BC (ELOB and ELOC), RNF7/RBX2 and a variable SOCS box domain-containing protein as substrate-specific recognition component. Also interacts (with lower preference) with CUL1, CUL2, CUL3, CUL4A and CUL4B; additional evidence is however required to confirm this result in vivo. Interacts with UBE2F. Interacts with CSNK2B, the interaction is not affected by phosphorylation by CK2. May also interact with DCUN1D1, DCUN1D2, DCUN1D3, DCUN1D4 and DCUN1D5. (Microbial infection) Following infection by HIV-1 virus, component of a cullin-5-RING E3 ubiquitin-protein ligase complex (ECS complex) hijacked by the HIV-1 Vif protein. Post-translationally, phosphorylation at Thr-10 by CK2 promotes its degradation by the proteasome. As to expression, expressed in heart, liver, skeletal muscle and pancreas. At very low levels expressed in brain, placenta and lung.

It is found in the cytoplasm. The protein localises to the nucleus. The enzyme catalyses S-ubiquitinyl-[E2 ubiquitin-conjugating enzyme]-L-cysteine + [acceptor protein]-L-lysine = [E2 ubiquitin-conjugating enzyme]-L-cysteine + N(6)-ubiquitinyl-[acceptor protein]-L-lysine.. It catalyses the reaction S-[NEDD8-protein]-yl-[E2 NEDD8-conjugating enzyme]-L-cysteine + [cullin]-L-lysine = [E2 NEDD8-conjugating enzyme]-L-cysteine + N(6)-[NEDD8-protein]-yl-[cullin]-L-lysine.. It functions in the pathway protein modification; protein ubiquitination. It participates in protein modification; protein neddylation. In terms of biological role, catalytic component of multiple cullin-5-RING E3 ubiquitin-protein ligase complexes (ECS complexes), which mediate the ubiquitination and subsequent proteasomal degradation of target proteins. It is thereby involved in various biological processes, such as cell cycle progression, signal transduction and transcription. The functional specificity of the E3 ubiquitin-protein ligase ECS complexes depend on the variable SOCS box-containing substrate recognition component. Within ECS complexes, RNF7/RBX2 recruits the E2 ubiquitination enzyme to the complex via its RING-type and brings it into close proximity to the substrate. Catalytic subunit of various SOCS-containing ECS complexes, such as the ECS(SOCS7) complex, that regulate reelin signaling by mediating ubiquitination and degradation of DAB1. The ECS(SOCS2) complex mediates the ubiquitination and subsequent proteasomal degradation of phosphorylated EPOR and GHR. Promotes ubiquitination and degradation of NF1, thereby regulating Ras protein signal transduction. As part of the ECS(ASB9) complex, catalyzes ubiquitination and degradation of CKB. The ECS(SPSB3) complex catalyzes ubiquitination of nuclear CGAS. As part of the ECS(RAB40C) complex, mediates ANKRD28 ubiquitination and degradation, thereby inhibiting protein phosphatase 6 (PP6) complex activity and focal adhesion assembly during cell migration. As part of some ECS complex, catalyzes 'Lys-11'-linked ubiquitination and degradation of BTRC. ECS complexes and ARIH2 collaborate in tandem to mediate ubiquitination of target proteins; ARIH2 mediating addition of the first ubiquitin on CRLs targets. Specifically catalyzes the neddylation of CUL5 via its interaction with UBE2F. Does not catalyze neddylation of other cullins (CUL1, CUL2, CUL3, CUL4A or CUL4B). May play a role in protecting cells from apoptosis induced by redox agents. Its function is as follows. Inactive. (Microbial infection) Following infection by HIV-1 virus, catalytic component of a cullin-5-RING E3 ubiquitin-protein ligase complex (ECS complex) hijacked by the HIV-1 Vif protein, which catalyzes ubiquitination and degradation of APOBEC3F and APOBEC3G. This is RING-box protein 2 from Homo sapiens (Human).